The sequence spans 62 residues: Large ribosomal subunit protein bL28 (62 aa).

This sequence belongs to the bacterial ribosomal protein bL28 family.

The polypeptide is Large ribosomal subunit protein bL28 (Staphylococcus epidermidis (strain ATCC 12228 / FDA PCI 1200)).